A 480-amino-acid chain; its full sequence is Glutamyl-tRNA(Gln) amidotransferase subunit A (480 aa).

Active-site charge relay system residues include Lys-74 and Ser-149. The active-site Acyl-ester intermediate is Ser-173.

Belongs to the amidase family. GatA subfamily. Heterotrimer of A, B and C subunits.

It carries out the reaction L-glutamyl-tRNA(Gln) + L-glutamine + ATP + H2O = L-glutaminyl-tRNA(Gln) + L-glutamate + ADP + phosphate + H(+). Allows the formation of correctly charged Gln-tRNA(Gln) through the transamidation of misacylated Glu-tRNA(Gln) in organisms which lack glutaminyl-tRNA synthetase. The reaction takes place in the presence of glutamine and ATP through an activated gamma-phospho-Glu-tRNA(Gln). The sequence is that of Glutamyl-tRNA(Gln) amidotransferase subunit A from Vesicomyosocius okutanii subsp. Calyptogena okutanii (strain HA).